The chain runs to 600 residues: Proton channel OTOP1 (600 aa).

The disordered stretch occupies residues 1 to 50 (MPGGPGAPSSPAASSGSSRAAPSGIAACPLSPPPLARGSPQASGPRRGAS). The Cytoplasmic segment spans residues 1–56 (MPGGPGAPSSPAASSGSSRAAPSGIAACPLSPPPLARGSPQASGPRRGASVPQKLA). Over residues 7–27 (APSSPAASSGSSRAAPSGIAA) the composition is skewed to low complexity. Residues 57–78 (ETLSSQYGLNVFVAGLLFLLAW) form a helical membrane-spanning segment. At 79–86 (AVHATGVG) the chain is on the extracellular side. Residues 87-110 (KSDLLCVLTALMLLQLLWMLWYVG) traverse the membrane as a helical segment. Topologically, residues 111–128 (RSYMQRRLIRPKDTHAGA) are cytoplasmic. The helical transmembrane segment at 129–151 (RWLRGSITLFAFITVVLGCLKVA) threads the bilayer. The Extracellular portion of the chain corresponds to 152 to 161 (YFIGFSECLS). A helical membrane pass occupies residues 162 to 186 (ATEGVFPVTHAVHTLLQVYFLWGHA). Topologically, residues 187–194 (KDIIMSFK) are cytoplasmic. The chain crosses the membrane as a helical span at residues 195 to 217 (TLERFGVIHSVFTNLLLWANSVL). The Extracellular segment spans residues 218–262 (NESKHQLNEHKERLITLGFGNITIVLDDHTPQCNCTPPALCSALS). Residues 263 to 288 (HGIYYLYPFNIEYQILASTMLYVLWK) traverse the membrane as a helical segment. Topologically, residues 289–309 (NIGRRVDSSQHQKMQCRFDGV) are cytoplasmic. Residues 310–332 (LVGSVLGLTVLAATIAVVVVYMI) form a helical membrane-spanning segment. Residues 333 to 342 (HIGRSKSKSE) are Extracellular-facing. The chain crosses the membrane as a helical span at residues 343-368 (SALIMFYLYAITVLLLMGAAGLVGSW). Residues 369-386 (IYRVDEKSLDESKNPARK) lie on the Cytoplasmic side of the membrane. The helical transmembrane segment at 387-411 (LDVDLLVATGSGSWLLSWGSILAIA) threads the bilayer. Topologically, residues 412–421 (CAETRPPYTW) are extracellular. Residues 422–442 (YNLPYSVLVIVEKYVQNIFII) form a helical membrane-spanning segment. Residues 443–532 (ESVHLEPEGV…QGGMKRRLLR (90 aa)) lie on the Cytoplasmic side of the membrane. A helical membrane pass occupies residues 533–551 (NITAFLFLCNISLWIPPAF). Residues 552-569 (GCRPEYDNGLEEIVFGFE) are Extracellular-facing. A helical membrane pass occupies residues 570–593 (PWIIVVNLAMPFSIFYRMHAAAAL). The Cytoplasmic portion of the chain corresponds to 594–600 (FEVYCKI).

This sequence belongs to the otopetrin family. Homodimer. Interacts with STAT1, independently of STAT1 phosphorylation status. In terms of tissue distribution, expressed in thymus, heart, kidney, skin, vestibular system of the inner ear, sour taste cells, heart, uterus, dorsal root ganglion, adrenal gland, lactating mammary gland and stimulated mast cells. In the inner ear, expressed in the supporting cells in extrastriolar regions of the saccule and in the utricle, but not in the cochlea. Expressed in brown adipose tissue. Expressed in epididymal white adipose tissue (eWAT), as well as in inguinal fat, in obese animals, but hardly detectable in eWAT from lean mice. Expressed in acid-sensing taste receptor cells (PKD2L1-positive cells), but not in other types of taste cells (at protein level).

The protein localises to the cell membrane. It is found in the cell projection. Its subcellular location is the microvillus. It catalyses the reaction H(+)(in) = H(+)(out). Activated by both acid and alkali, with proton influx in response to extracellular acid and proton efflux during alkali stimulation. Inhibited by Zn(2+); this inhibition is thought to be pH-sensitive. Currents evoked in response to mild acid (pH 6.0) stimulus may also be mildly potentiated by exposure to Zn(2+). Activated by NH(4)Cl. In terms of biological role, proton-selective ion channel. Biphasically modulated by acid and alkali, mediating proton influx and efflux in response to extracellular acid and base stimulation, respectively. Sour taste receptor, which carries inward currents in response to extracellular acidification. Sensor for ammonium chloride (NH(4)Cl) in taste receptor cells. NH(4)Cl acts by increasing the intracellular pH, thereby generating a driving force for proton entry through OTOP1 channel. Might also participate in alkaline sensation. Plays a role in the regulation of Ca(2+) flux in response to purigenic (ATP, ADP and UDP) stimuli, leading to increase in cytosolic Ca(2+) due to influx of extracellular calcium. May play this role by inhibiting P2Y purinoceptor-mediated Ca(2+) release in a Ca(2+)-dependent manner and promote an influx of Ca(2+) in response to ATP. Through this mechanism and possibly others, plays a role in the formation and function of calcium carbonate-based structures in the vestibular system of the inner ear, called otoconia, that sense gravity and linear acceleration. In obesity, may attenuate adipose tissue inflammation, through the negative regulation of IFNG signaling, hence may play an adaptive role in the maintainance of metabolic homeostasis. Following alkali activation, may also be permeable Na(+), K(+), Cs(+) and Li(+). The polypeptide is Proton channel OTOP1 (Mus musculus (Mouse)).